The primary structure comprises 411 residues: Protein Rv3035 (411 aa).

This is Protein Rv3035 from Mycobacterium tuberculosis (strain ATCC 25618 / H37Rv).